Here is a 670-residue protein sequence, read N- to C-terminus: ATP synthase subunit alpha 2 (670 aa).

180-187 (GDRATGKT) provides a ligand contact to ATP. The disordered stretch occupies residues 527 to 670 (AEDAAGDIGG…DAEAEARHKR (144 aa)). Over residues 543–588 (ARGDADRDADHGANREVSREVSPEASREVSREVSREVSHEADRDAA) the composition is skewed to basic and acidic residues. The segment covering 589-599 (ADAARVAGRAP) has biased composition (low complexity). Basic and acidic residues predominate over residues 621-639 (ADGDRASASRPRPDARGDA). Positions 640–661 (ARTAPSPQGGAEVNVNAAANVD) are enriched in low complexity.

It belongs to the ATPase alpha/beta chains family. In terms of assembly, F-type ATPases have 2 components, CF(1) - the catalytic core - and CF(0) - the membrane proton channel. CF(1) has five subunits: alpha(3), beta(3), gamma(1), delta(1), epsilon(1). CF(0) has three main subunits: a(1), b(2) and c(9-12). The alpha and beta chains form an alternating ring which encloses part of the gamma chain. CF(1) is attached to CF(0) by a central stalk formed by the gamma and epsilon chains, while a peripheral stalk is formed by the delta and b chains.

It localises to the cell inner membrane. It carries out the reaction ATP + H2O + 4 H(+)(in) = ADP + phosphate + 5 H(+)(out). Functionally, produces ATP from ADP in the presence of a proton gradient across the membrane. The alpha chain is a regulatory subunit. The chain is ATP synthase subunit alpha 2 from Burkholderia pseudomallei (strain 668).